Reading from the N-terminus, the 365-residue chain is MMSKSMSISVNGQSQVPPGFRFHPTEEELLQYYLRKKVNSIEIDLDVIRDVDLNKLEPWDIQEMCKIGTTPQNDWYFFSHKDKKYPTGTRTNRATAAGFWKATGRDKIIYSNGRRIGMRKTLVFYKGRAPHGQKSDWIMHEYRLDDNIISPEDVTVHEVVSIIGEASQDEGWVVCRIFKKKNLHKTLNSPVGGASLSGGGDTPKTTSSQIFNEDTLDQFLELMGRSCKEELNLDPFMKLPNLESPNSQAINNCHVSSPDTNHNIHVSNVVDTSFVTSWAALDRLVASQLNGPTSYSITAVNESHVGHDHLALPSVRSPYPSLNRSASYHAGLTQEYTPEMELWNTTTSSLSSSPGPFCHVSNGSG.

Residues Val16–Lys180 enclose the NAC domain. A DNA-binding region spans residues Ile116–Thr186.

In terms of tissue distribution, expressed in various aboveground tissues undergoing thickening of the lignified secondary wall such as anthers, filaments of stamens, the base of carpels, styles, the boundaries between siliques and pedicels, the midrib of leaf veins, and inflorescence stems, specifically in interfascicular fibers (sclerenchyma), cells differentiating into vascular vessels, and xylary fibers (secondary xylem).

It localises to the nucleus. In terms of biological role, transcription activator of genes involved in biosynthesis of secondary walls. Together with NST2 and NST3, required for the secondary cell wall thickening of sclerenchymatous fibers, secondary xylem (tracheary elements), and of the anther endocethium, which is necessary for anther dehiscence. May also regulate the secondary cell wall lignification of other tissues. This is NAC domain-containing protein 43 (NAC043) from Arabidopsis thaliana (Mouse-ear cress).